The following is a 206-amino-acid chain: Ribosomal RNA large subunit methyltransferase E (206 aa).

The S-adenosyl-L-methionine site is built by Gly60, Trp62, Asp80, Asp96, and Asp121. Lys161 serves as the catalytic Proton acceptor.

It belongs to the class I-like SAM-binding methyltransferase superfamily. RNA methyltransferase RlmE family.

It localises to the cytoplasm. It catalyses the reaction uridine(2552) in 23S rRNA + S-adenosyl-L-methionine = 2'-O-methyluridine(2552) in 23S rRNA + S-adenosyl-L-homocysteine + H(+). In terms of biological role, specifically methylates the uridine in position 2552 of 23S rRNA at the 2'-O position of the ribose in the fully assembled 50S ribosomal subunit. The polypeptide is Ribosomal RNA large subunit methyltransferase E (Legionella pneumophila (strain Corby)).